The primary structure comprises 269 residues: 4-hydroxy-tetrahydrodipicolinate reductase (269 aa).

Residues 8–13 (GAAGRM) and glutamate 34 each bind NAD(+). An NADP(+)-binding site is contributed by arginine 35. NAD(+) is bound by residues 98 to 100 (GTT) and 122 to 125 (APNY). Residue histidine 155 is the Proton donor/acceptor of the active site. Histidine 156 serves as a coordination point for (S)-2,3,4,5-tetrahydrodipicolinate. Catalysis depends on lysine 159, which acts as the Proton donor. Residue 165–166 (GT) coordinates (S)-2,3,4,5-tetrahydrodipicolinate.

This sequence belongs to the DapB family.

It is found in the cytoplasm. It carries out the reaction (S)-2,3,4,5-tetrahydrodipicolinate + NAD(+) + H2O = (2S,4S)-4-hydroxy-2,3,4,5-tetrahydrodipicolinate + NADH + H(+). The catalysed reaction is (S)-2,3,4,5-tetrahydrodipicolinate + NADP(+) + H2O = (2S,4S)-4-hydroxy-2,3,4,5-tetrahydrodipicolinate + NADPH + H(+). It participates in amino-acid biosynthesis; L-lysine biosynthesis via DAP pathway; (S)-tetrahydrodipicolinate from L-aspartate: step 4/4. Catalyzes the conversion of 4-hydroxy-tetrahydrodipicolinate (HTPA) to tetrahydrodipicolinate. The polypeptide is 4-hydroxy-tetrahydrodipicolinate reductase (Vibrio campbellii (strain ATCC BAA-1116)).